The primary structure comprises 203 residues: Corrinoid adenosyltransferase (203 aa).

Residues 1 to 21 (MNESPEKDQRHRERMERKKAV) form a disordered region. Residue 41–47 (GNGKGKS) coordinates ATP.

The protein belongs to the Cob(I)alamin adenosyltransferase family. As to quaternary structure, monomer. Mn(2+) serves as cofactor.

Its subcellular location is the cytoplasm. It carries out the reaction 2 cob(II)yrinate a,c diamide + reduced [electron-transfer flavoprotein] + 2 ATP = 2 adenosylcob(III)yrinate a,c-diamide + 2 triphosphate + oxidized [electron-transfer flavoprotein] + 3 H(+). It catalyses the reaction 2 cob(II)alamin + reduced [electron-transfer flavoprotein] + 2 ATP = 2 adenosylcob(III)alamin + 2 triphosphate + oxidized [electron-transfer flavoprotein] + 3 H(+). It functions in the pathway cofactor biosynthesis; adenosylcobalamin biosynthesis; adenosylcobalamin from cob(II)yrinate a,c-diamide: step 2/7. Functionally, required for both de novo synthesis of the corrin ring for the assimilation of exogenous corrinoids. Participates in the adenosylation of a variety of incomplete and complete corrinoids. The chain is Corrinoid adenosyltransferase (cobO) from Pseudomonas aeruginosa (strain ATCC 15692 / DSM 22644 / CIP 104116 / JCM 14847 / LMG 12228 / 1C / PRS 101 / PAO1).